The primary structure comprises 433 residues: Bifunctional protein GlmU (433 aa).

Residues 1–226 (MLSVIILAAG…EECFLGVNSQ (226 aa)) form a pyrophosphorylase region. Residues 7 to 10 (LAAG), K21, and 80 to 81 (GT) each bind UDP-N-acetyl-alpha-D-glucosamine. D106 contacts Mg(2+). UDP-N-acetyl-alpha-D-glucosamine is bound by residues G138, E152, N167, and N224. N224 lines the Mg(2+) pocket. The linker stretch occupies residues 227–247 (TERAKAEEIMLERLRKNAMDL). Residues 248-433 (GVVMQLPSSI…NGYFKFFKKP (186 aa)) are N-acetyltransferase. UDP-N-acetyl-alpha-D-glucosamine-binding residues include R311 and K328. The Proton acceptor role is filled by H339. 2 residues coordinate UDP-N-acetyl-alpha-D-glucosamine: Y342 and N353. Residues A356, 362–363 (NY), S381, S399, and R416 each bind acetyl-CoA.

In the N-terminal section; belongs to the N-acetylglucosamine-1-phosphate uridyltransferase family. This sequence in the C-terminal section; belongs to the transferase hexapeptide repeat family. Homotrimer. Requires Mg(2+) as cofactor.

The protein resides in the cytoplasm. It carries out the reaction alpha-D-glucosamine 1-phosphate + acetyl-CoA = N-acetyl-alpha-D-glucosamine 1-phosphate + CoA + H(+). It catalyses the reaction N-acetyl-alpha-D-glucosamine 1-phosphate + UTP + H(+) = UDP-N-acetyl-alpha-D-glucosamine + diphosphate. It functions in the pathway nucleotide-sugar biosynthesis; UDP-N-acetyl-alpha-D-glucosamine biosynthesis; N-acetyl-alpha-D-glucosamine 1-phosphate from alpha-D-glucosamine 6-phosphate (route II): step 2/2. The protein operates within nucleotide-sugar biosynthesis; UDP-N-acetyl-alpha-D-glucosamine biosynthesis; UDP-N-acetyl-alpha-D-glucosamine from N-acetyl-alpha-D-glucosamine 1-phosphate: step 1/1. Its pathway is bacterial outer membrane biogenesis; LPS lipid A biosynthesis. Functionally, catalyzes the last two sequential reactions in the de novo biosynthetic pathway for UDP-N-acetylglucosamine (UDP-GlcNAc). The C-terminal domain catalyzes the transfer of acetyl group from acetyl coenzyme A to glucosamine-1-phosphate (GlcN-1-P) to produce N-acetylglucosamine-1-phosphate (GlcNAc-1-P), which is converted into UDP-GlcNAc by the transfer of uridine 5-monophosphate (from uridine 5-triphosphate), a reaction catalyzed by the N-terminal domain. In Helicobacter pylori (strain HPAG1), this protein is Bifunctional protein GlmU.